The primary structure comprises 174 residues: WAP four-disulfide core domain protein 2 (174 aa).

Positions 1–25 (MPACRLCLLAAGLLLGLLLFTPISA) are cleaved as a signal peptide. Residues 29-74 (DAEKPGECPQLEPITDCVLECTLDKDCADNRKCCQAGCSSVCSKPN) form the WAP 1 domain. 4 cysteine pairs are disulfide-bonded: Cys-36/Cys-62, Cys-45/Cys-66, Cys-49/Cys-61, and Cys-55/Cys-70. Positions 68–117 (SVCSKPNGPSEGELSGTDTKLSETGTTTQSAGLDHTTKPPGGQVSTKPPA) are disordered. Residues 83–98 (GTDTKLSETGTTTQSA) are compositionally biased toward polar residues. Residues 125–173 (VREKQGTCPSVDIPKLGLCEDQCQVDSQCSGNMKCCRNGCGKMACTTPK) form the WAP 2 domain. 4 disulfides stabilise this stretch: Cys-132-Cys-160, Cys-143-Cys-164, Cys-147-Cys-159, and Cys-153-Cys-169.

In terms of assembly, homotrimer; disulfide-linked.

It localises to the secreted. Its function is as follows. Broad range protease inhibitor. This Mus musculus (Mouse) protein is WAP four-disulfide core domain protein 2 (Wfdc2).